The primary structure comprises 142 residues: Succinate dehydrogenase subunit 6, mitochondrial (142 aa).

N-acetylglycine is present on Gly2.

In terms of assembly, component of complex II composed of eight subunits in plants: four classical SDH subunits SDH1, SDH2, SDH3 and SDH4 (a flavoprotein (FP), an iron-sulfur protein (IP), and a cytochrome b composed of a large and a small subunit.), as well as four subunits unknown in mitochondria from bacteria and heterotrophic eukaryotes.

The protein resides in the mitochondrion inner membrane. The protein operates within carbohydrate metabolism; tricarboxylic acid cycle. This chain is Succinate dehydrogenase subunit 6, mitochondrial, found in Arabidopsis thaliana (Mouse-ear cress).